We begin with the raw amino-acid sequence, 665 residues long: Cysteine-rich receptor-like protein kinase 26 (665 aa).

The first 22 residues, 1 to 22, serve as a signal peptide directing secretion; it reads MLSLLLPLISLLFQIQCFTVKS. The Extracellular portion of the chain corresponds to 23-283; sequence QPVPLNQICS…GDKNRGVPKA (261 aa). 2 Gnk2-homologous domains span residues 26 to 129 and 135 to 244; these read PLNQ…NRTI and ISPH…PWRF. N-linked (GlcNAc...) asparagine glycosylation is found at Asn33, Asn37, Asn67, Asn126, Asn146, and Asn266. The interval 251–275 is disordered; that stretch reads DDPSSVPATPSRPPKNETRSVTQGD. A helical transmembrane segment spans residues 284–304; sequence LIFASASVAIVVLFIVLLVVF. Residues 305–665 lie on the Cytoplasmic side of the membrane; sequence LKLRRKENIR…YNSNTELYPR (361 aa). One can recognise a Protein kinase domain in the interval 344 to 624; it reads FSLENKLGEG…VLMLDGHTIA (281 aa). ATP is bound by residues 350 to 358 and Lys372; that span reads LGEGGFGAV. Tyr417 bears the Phosphotyrosine mark. Catalysis depends on Asp469, which acts as the Proton acceptor. Position 473 is a phosphoserine (Ser473). A Phosphothreonine modification is found at Thr510. The residue at position 518 (Tyr518) is a Phosphotyrosine. Residues 641 to 665 form a disordered region; sequence SDSSSSLGHNAKTSNYNSNTELYPR. Polar residues predominate over residues 647–665; that stretch reads LGHNAKTSNYNSNTELYPR.

It belongs to the protein kinase superfamily. Ser/Thr protein kinase family. CRK subfamily.

It is found in the membrane. It carries out the reaction L-seryl-[protein] + ATP = O-phospho-L-seryl-[protein] + ADP + H(+). The catalysed reaction is L-threonyl-[protein] + ATP = O-phospho-L-threonyl-[protein] + ADP + H(+). The sequence is that of Cysteine-rich receptor-like protein kinase 26 (CRK26) from Arabidopsis thaliana (Mouse-ear cress).